A 432-amino-acid chain; its full sequence is MERATVRLLRGGALLRRNFPSCLSSWKTPPHALNSSQSEAQLKATSNGPPLAPLQTFTDEEMMIKSAVKKFAQEQVAPFVSKMDEDSKMEKSVIQGLFQQGLMGIEIDTKYGGTGASFFSSVLVIEELAKVDASVALVCDIQNTLINRMIGKYGTEEQKATYLPKLATEKASSICISETGAGSDSFAMKTRADKKGDYYIINGSKMWISSAEIAGLFVVMANADFSAGYKGITCFLVDGDTEGLHVGKPENKLGIRASSTCPVTFENVKVPKTNILGQVGHGYKYAIGSLNEGRIGIAAQMLGVAQGCFDYTIPYIKERKQFGRRVFDFQGLQHQVAHMATQLEAARLLTYNAARLLEAGRPMIKEASMAKYHASELAGLITSKCIEWMGGVGYTKSYPVEKYFRDAKIGTIYEGTSNIQLNTIAKCISAEY.

A mitochondrion-targeting transit peptide spans 1 to 33 (MERATVRLLRGGALLRRNFPSCLSSWKTPPHAL). Lys-70 bears the N6-acetyllysine; alternate mark. Lys-70 carries the N6-succinyllysine; alternate modification. FAD-binding positions include 174–183 (ICISETGAGS) and 207–209 (WIS). Ser-183 serves as a coordination point for substrate. Ser-183 is modified (phosphoserine). Substrate-binding residues include Tyr-229 and Tyr-283. Lys-284 is modified (N6-acetyllysine; alternate). Lys-284 bears the N6-succinyllysine; alternate mark. 291-294 (NEGR) is a substrate binding site. FAD contacts are provided by residues Arg-319, Gln-330, and 387 to 391 (EWMGG). Glu-414 serves as the catalytic Proton acceptor. 416-418 (TSN) serves as a coordination point for FAD. At Lys-426 the chain carries N6-acetyllysine.

Belongs to the acyl-CoA dehydrogenase family. Homotetramer. The cofactor is FAD.

It is found in the mitochondrion matrix. It catalyses the reaction 2-methylbutanoyl-CoA + oxidized [electron-transfer flavoprotein] + H(+) = (2E)-2-methylbut-2-enoyl-CoA + reduced [electron-transfer flavoprotein]. The catalysed reaction is (2S)-2-methylbutanoyl-CoA + oxidized [electron-transfer flavoprotein] + H(+) = (2E)-2-methylbut-2-enoyl-CoA + reduced [electron-transfer flavoprotein]. The enzyme catalyses (2R)-2-methylbutanoyl-CoA + oxidized [electron-transfer flavoprotein] + H(+) = ethylacryloyl-CoA + reduced [electron-transfer flavoprotein]. It carries out the reaction butanoyl-CoA + oxidized [electron-transfer flavoprotein] + H(+) = (2E)-butenoyl-CoA + reduced [electron-transfer flavoprotein]. It catalyses the reaction 2-methylpropanoyl-CoA + oxidized [electron-transfer flavoprotein] + H(+) = 2-methylpropenoyl-CoA + reduced [electron-transfer flavoprotein]. The catalysed reaction is hexanoyl-CoA + oxidized [electron-transfer flavoprotein] + H(+) = (2E)-hexenoyl-CoA + reduced [electron-transfer flavoprotein]. The enzyme catalyses valproyl-CoA + oxidized [electron-transfer flavoprotein] + H(+) = (2E)-2-propylpent-2-enoyl-CoA + reduced [electron-transfer flavoprotein]. The protein operates within lipid metabolism; mitochondrial fatty acid beta-oxidation. It functions in the pathway amino-acid degradation; L-isoleucine degradation. Functionally, short and branched chain specific acyl-CoA dehydrogenase that catalyzes the removal of one hydrogen from C-2 and C-3 of the fatty acyl-CoA thioester, resulting in the formation of trans-2-enoyl-CoA. Among the different mitochondrial acyl-CoA dehydrogenases, acts specifically on short and branched chain acyl-CoA derivatives such as (S)-2-methylbutyryl-CoA as well as short straight chain acyl-CoAs such as butyryl-CoA. Plays an important role in the metabolism of L-isoleucine by catalyzing the dehydrogenation of 2-methylbutyryl-CoA, one of the steps of the L-isoleucine catabolic pathway. Can also act on valproyl-CoA, a metabolite of the valproic acid drug. The chain is Short/branched chain specific acyl-CoA dehydrogenase, mitochondrial (ACADSB) from Bos taurus (Bovine).